The sequence spans 182 residues: LIM domain-containing protein C (182 aa).

LIM zinc-binding domains are found at residues 3–63 and 110–170; these read SICP…LFRQ and TNCP…KFGP.

It localises to the cell projection. The protein resides in the pseudopodium. Its subcellular location is the cytoplasm. It is found in the cell cortex. The protein localises to the cytoskeleton. In terms of biological role, binds to F-actin and may modulate the chemotactic response during early development and contribute to the maintenance of the strength of the actin cytoskeleton. This chain is LIM domain-containing protein C (limC), found in Dictyostelium discoideum (Social amoeba).